The following is a 92-amino-acid chain: Serine rich endogenous peptide 11 (92 aa).

Positions 1–29 (MENNTFSSKSINLLILLLLLCTFLCQTES) are cleaved as a signal peptide. The tract at residues 50-92 (PNTDIGTPSSTSDRGGGGNGRRLMSQMDVGASSSGQGGGRNRH) is disordered. Over residues 53 to 62 (DIGTPSSTSD) the composition is skewed to polar residues. 2 short sequence motifs (SCOOP motif) span residues 53 to 67 (DIGT…GGGG) and 75 to 89 (QMDV…GGGR). 2 short sequence motifs (sxS motif essential for MIK2 binding) span residues 59 to 61 (STS) and 81 to 83 (SSS).

Belongs to the serine rich endogenous peptide (SCOOP) phytocytokine family. As to quaternary structure, interacts with MIK2 (via extracellular leucine-rich repeat domain); this interaction triggers the formation of complex between MIK2 and the BAK1/SERK3 and SERK4 coreceptors, and subsequent BAK1 activation by phosphorylation. In terms of tissue distribution, mostly expressed in seedlings shoots and roots, and, to a lower extent, in leaves.

It is found in the cell membrane. The protein resides in the secreted. The protein localises to the extracellular space. It localises to the apoplast. In terms of biological role, brassicaceae-specific phytocytokine (plant endogenous peptide released into the apoplast) perceived by MIK2 in a BAK1/SERK3 and SERK4 coreceptors-dependent manner, that modulates various physiological and antimicrobial processes including growth prevention and reactive oxygen species (ROS) response regulation. This chain is Serine rich endogenous peptide 11, found in Arabidopsis thaliana (Mouse-ear cress).